The following is a 304-amino-acid chain: Probable 5-dehydro-4-deoxyglucarate dehydratase (304 aa).

Belongs to the DapA family.

The enzyme catalyses 5-dehydro-4-deoxy-D-glucarate + H(+) = 2,5-dioxopentanoate + CO2 + H2O. It functions in the pathway carbohydrate acid metabolism; D-glucarate degradation; 2,5-dioxopentanoate from D-glucarate: step 2/2. This chain is Probable 5-dehydro-4-deoxyglucarate dehydratase, found in Rhodococcus opacus (strain B4).